The sequence spans 514 residues: 2,3-bisphosphoglycerate-independent phosphoglycerate mutase (514 aa).

Mn(2+) contacts are provided by Asp-14 and Ser-64. Ser-64 serves as the catalytic Phosphoserine intermediate. Residues His-125, 155–156 (RD), Arg-187, Arg-193, 263–266 (RADR), and Lys-336 contribute to the substrate site. Residues Asp-403, His-407, Asp-444, His-445, and His-463 each coordinate Mn(2+).

Belongs to the BPG-independent phosphoglycerate mutase family. Monomer. The cofactor is Mn(2+).

The enzyme catalyses (2R)-2-phosphoglycerate = (2R)-3-phosphoglycerate. The protein operates within carbohydrate degradation; glycolysis; pyruvate from D-glyceraldehyde 3-phosphate: step 3/5. Functionally, catalyzes the interconversion of 2-phosphoglycerate and 3-phosphoglycerate. This chain is 2,3-bisphosphoglycerate-independent phosphoglycerate mutase, found in Shewanella sp. (strain W3-18-1).